The following is a 602-amino-acid chain: Probable HECT-type ubiquitin ligase-interacting protein creD (602 aa).

Disordered regions lie at residues E375 to S398 and T457 to P499. Low complexity predominate over residues P463 to P475. Positions L477 to I492 are enriched in basic and acidic residues.

The protein belongs to the arrestin family. As to quaternary structure, interacts with hulA.

Functionally, component of the regulatory network controlling carbon source utilization through ubiquitination and deubiquitination involving creA, creB, creC, creD and acrB. May be involved in signaling by recognizing appropriately phosphorylated substrates via its arrestin domains and then recruit a HECT-type ubiquitin ligase such as hulA, leading to ubiquitination of the substrate, providing a link between ubiquitination and phosphorylation in protein regulation and stability. The protein is Probable HECT-type ubiquitin ligase-interacting protein creD (creD) of Aspergillus clavatus (strain ATCC 1007 / CBS 513.65 / DSM 816 / NCTC 3887 / NRRL 1 / QM 1276 / 107).